The following is a 432-amino-acid chain: Adenylosuccinate synthetase (432 aa).

Residues 13-19 (GDEGKGK) and 41-43 (GHT) contribute to the GTP site. Residue Asp14 is the Proton acceptor of the active site. Mg(2+) contacts are provided by Asp14 and Gly41. IMP contacts are provided by residues 14 to 17 (DEGK), 39 to 42 (NAGH), Thr130, Arg144, Gln225, Thr240, and Arg304. The active-site Proton donor is the His42. 300-306 (AVTGRPR) provides a ligand contact to substrate. GTP contacts are provided by residues Arg306, 332 to 334 (KLD), and 415 to 417 (STG).

This sequence belongs to the adenylosuccinate synthetase family. Homodimer. Mg(2+) is required as a cofactor.

The protein resides in the cytoplasm. The enzyme catalyses IMP + L-aspartate + GTP = N(6)-(1,2-dicarboxyethyl)-AMP + GDP + phosphate + 2 H(+). It functions in the pathway purine metabolism; AMP biosynthesis via de novo pathway; AMP from IMP: step 1/2. Plays an important role in the de novo pathway of purine nucleotide biosynthesis. Catalyzes the first committed step in the biosynthesis of AMP from IMP. This chain is Adenylosuccinate synthetase, found in Haemophilus influenzae (strain PittGG).